A 130-amino-acid polypeptide reads, in one-letter code: Fluoride-specific ion channel FluC (130 aa).

4 helical membrane-spanning segments follow: residues 1-21 (MGEILLLAAGGALGAVSRYGL), 36-56 (GTLIVNCLGCFVLGFLMQWGF), 65-85 (LKLMLTAGFLGAFTTFSTFSY), and 103-123 (ILANVLLGLLMVFIGAYLGSL). The Na(+) site is built by G75 and T78.

The protein belongs to the fluoride channel Fluc/FEX (TC 1.A.43) family.

Its subcellular location is the cell membrane. The catalysed reaction is fluoride(in) = fluoride(out). With respect to regulation, na(+) is not transported, but it plays an essential structural role and its presence is essential for fluoride channel function. In terms of biological role, fluoride-specific ion channel. Important for reducing fluoride concentration in the cell, thus reducing its toxicity. This Dehalococcoides mccartyi (strain ATCC BAA-2266 / KCTC 15142 / 195) (Dehalococcoides ethenogenes (strain 195)) protein is Fluoride-specific ion channel FluC.